A 302-amino-acid chain; its full sequence is MAAKELSHLQQLEAESIQIIREVAAEFDNPVMMYSIGKDSSVMLHLARKAFYPGKIPFPLLHVDTDWKFKEMIAFRDEQAKEFGFELLVHKNPEGLEMGISPFEHGSAKHTDIMKTQGLKQALNKYGFDAAFGGARRDEEKSRAKERVYSFRDKHHTWDPKNQRPELWRTYNGAVNKGESIRVFPLSNWTELDIWQYIYQENIQLVPLYFAQKRPVVERDGMMIMVDDDRMPLAEGEQPKQELVRFRTLGCYPLTGAMHSEADTLEKIIEEMLLTRSSERQGRLIDSDQSASMELKKRQGYF.

This sequence belongs to the PAPS reductase family. CysD subfamily. In terms of assembly, heterodimer composed of CysD, the smaller subunit, and CysN.

The catalysed reaction is sulfate + ATP + H(+) = adenosine 5'-phosphosulfate + diphosphate. Its pathway is sulfur metabolism; hydrogen sulfide biosynthesis; sulfite from sulfate: step 1/3. With CysN forms the ATP sulfurylase (ATPS) that catalyzes the adenylation of sulfate producing adenosine 5'-phosphosulfate (APS) and diphosphate, the first enzymatic step in sulfur assimilation pathway. APS synthesis involves the formation of a high-energy phosphoric-sulfuric acid anhydride bond driven by GTP hydrolysis by CysN coupled to ATP hydrolysis by CysD. The chain is Sulfate adenylyltransferase subunit 2 from Shewanella halifaxensis (strain HAW-EB4).